Consider the following 333-residue polypeptide: Mitochondrial fission regulator 1 (333 aa).

Phosphoserine is present on S119. The span at Y286–S307 shows a compositional bias: basic and acidic residues. Residues Y286–H315 are disordered.

The protein belongs to the MTFR1 family.

Its subcellular location is the mitochondrion. Functionally, may play a role in mitochondrial aerobic respiration. May also regulate mitochondrial organization and fission. In Pongo abelii (Sumatran orangutan), this protein is Mitochondrial fission regulator 1 (MTFR1).